Here is a 156-residue protein sequence, read N- to C-terminus: Small ribosomal subunit protein uS7 (156 aa).

It belongs to the universal ribosomal protein uS7 family. As to quaternary structure, part of the 30S ribosomal subunit. Contacts proteins S9 and S11.

In terms of biological role, one of the primary rRNA binding proteins, it binds directly to 16S rRNA where it nucleates assembly of the head domain of the 30S subunit. Is located at the subunit interface close to the decoding center, probably blocks exit of the E-site tRNA. This is Small ribosomal subunit protein uS7 from Thermoanaerobacter pseudethanolicus (strain ATCC 33223 / 39E) (Clostridium thermohydrosulfuricum).